The primary structure comprises 218 residues: Phosphoribosylformylglycinamidine synthase subunit PurQ (218 aa).

The 217-residue stretch at 2–218 (TIGIVVFPGS…IKILQALLSN (217 aa)) folds into the Glutamine amidotransferase type-1 domain. C86 functions as the Nucleophile in the catalytic mechanism. Active-site residues include H194 and E196.

In terms of assembly, part of the FGAM synthase complex composed of 1 PurL, 1 PurQ and 2 PurS subunits.

The protein localises to the cytoplasm. It carries out the reaction N(2)-formyl-N(1)-(5-phospho-beta-D-ribosyl)glycinamide + L-glutamine + ATP + H2O = 2-formamido-N(1)-(5-O-phospho-beta-D-ribosyl)acetamidine + L-glutamate + ADP + phosphate + H(+). The enzyme catalyses L-glutamine + H2O = L-glutamate + NH4(+). The protein operates within purine metabolism; IMP biosynthesis via de novo pathway; 5-amino-1-(5-phospho-D-ribosyl)imidazole from N(2)-formyl-N(1)-(5-phospho-D-ribosyl)glycinamide: step 1/2. Functionally, part of the phosphoribosylformylglycinamidine synthase complex involved in the purines biosynthetic pathway. Catalyzes the ATP-dependent conversion of formylglycinamide ribonucleotide (FGAR) and glutamine to yield formylglycinamidine ribonucleotide (FGAM) and glutamate. The FGAM synthase complex is composed of three subunits. PurQ produces an ammonia molecule by converting glutamine to glutamate. PurL transfers the ammonia molecule to FGAR to form FGAM in an ATP-dependent manner. PurS interacts with PurQ and PurL and is thought to assist in the transfer of the ammonia molecule from PurQ to PurL. The chain is Phosphoribosylformylglycinamidine synthase subunit PurQ from Prochlorococcus marinus (strain SARG / CCMP1375 / SS120).